A 98-amino-acid chain; its full sequence is Integration host factor subunit alpha (98 aa).

The disordered stretch occupies residues 49–71; the sequence is FGNFDLRDKNQRPGRNPKTGEDI.

Belongs to the bacterial histone-like protein family. In terms of assembly, heterodimer of an alpha and a beta chain.

In terms of biological role, this protein is one of the two subunits of integration host factor, a specific DNA-binding protein that functions in genetic recombination as well as in transcriptional and translational control. This Edwardsiella ictaluri (strain 93-146) protein is Integration host factor subunit alpha.